The primary structure comprises 137 residues: Large ribosomal subunit protein uL16 (137 aa).

The protein belongs to the universal ribosomal protein uL16 family. Part of the 50S ribosomal subunit.

Its function is as follows. Binds 23S rRNA and is also seen to make contacts with the A and possibly P site tRNAs. The protein is Large ribosomal subunit protein uL16 of Acinetobacter baylyi (strain ATCC 33305 / BD413 / ADP1).